The chain runs to 348 residues: MYTAIPQSGSPFPGSVQDPGLHVWRVEKLKPVPVAQENQGVFFSGDSYLVLHNGPEEVSHLHLWIGQQSSRDEQGACAVLAVHLNTLLGERPVQHREVQGNESDLFMSYFPRGLKYQEGGVESAFHKTSTGAPAAIKKLYQVKGKKNIRATERALNWDSFNTGDCFILDLGQNIFAWCGGKSNILERNKARDLALAIRDSERQGKAQVEIVTDGEEPAEMIQVLGPKPALKEGNPEEDLTADKANAQAAALYKVSDATGQMNLTKVADSSPFALELLISDDCFVLDNGLCGKIYIWKGRKANEKERQAALQVAEGFISRMQYAPNTQVEILPQGHESPIFKQFFKDWK.

An N-acetylmethionine modification is found at methionine 1. The stretch at 27–75 (EKLKPVPVAQENQGVFFSGDSYLVLHNGPEEVSHLHLWIGQQSSRDEQG) is one Gelsolin-like 1 repeat. The short motif at 137 to 146 (KKLYQVKGKK) is the Nuclear localization signal element. Gelsolin-like repeat units follow at residues 148-188 (IRAT…LERN) and 261-307 (MNLT…KERQ). Serine 337 is modified (phosphoserine).

This sequence belongs to the villin/gelsolin family. As to quaternary structure, interacts with NUP62. Interacts with NUTF2 and RAN; involved in CAPG nuclear import. Post-translationally, the N-terminus is blocked. As to expression, macrophages and macrophage-like cells.

It is found in the nucleus. Its subcellular location is the cytoplasm. The protein resides in the melanosome. It localises to the cell projection. The protein localises to the lamellipodium. It is found in the ruffle. Its function is as follows. Calcium-sensitive protein which reversibly blocks the barbed ends of actin filaments but does not sever preformed actin filaments. May play an important role in macrophage function. May play a role in regulating cytoplasmic and/or nuclear structures through potential interactions with actin. May bind DNA. The protein is Macrophage-capping protein (CAPG) of Homo sapiens (Human).